The following is a 331-amino-acid chain: uncharacterized protein (331 aa).

It to bacterial alkanal monooxygenase alpha and beta chains.

This is an uncharacterized protein from Bacillus subtilis (strain 168).